A 205-amino-acid chain; its full sequence is GTP cyclohydrolase-2 (205 aa).

A GTP-binding site is contributed by 49–53; the sequence is RIHSE. Residues Cys-54, Cys-65, and Cys-67 each contribute to the Zn(2+) site. Residues Gln-70, 92–94, and Thr-114 each bind GTP; that span reads EGR. Asp-126 acts as the Proton acceptor in catalysis. Arg-128 acts as the Nucleophile in catalysis. Thr-149 and Lys-154 together coordinate GTP.

It belongs to the GTP cyclohydrolase II family. It depends on Zn(2+) as a cofactor.

The catalysed reaction is GTP + 4 H2O = 2,5-diamino-6-hydroxy-4-(5-phosphoribosylamino)-pyrimidine + formate + 2 phosphate + 3 H(+). It functions in the pathway cofactor biosynthesis; riboflavin biosynthesis; 5-amino-6-(D-ribitylamino)uracil from GTP: step 1/4. Functionally, catalyzes the conversion of GTP to 2,5-diamino-6-ribosylamino-4(3H)-pyrimidinone 5'-phosphate (DARP), formate and pyrophosphate. This is GTP cyclohydrolase-2 from Shewanella sediminis (strain HAW-EB3).